The following is a 108-amino-acid chain: Abdominal ganglion neuropeptide R3-14 (108 aa).

A signal peptide spans 1 to 23 (MQVLHLCLAVSIAVALLSQAAWS). Residues glutamate 24 and glutamate 52 each carry the pyrrolidone carboxylic acid (Glu); partial modification. Glutamine 66 bears the Pyrrolidone carboxylic acid mark.

Post-translationally, the partial formation of pyroglutamate from N-terminal glutamic acid in peptides isolated from single cells is detected by mass spectrometry. There are indications this modification depends on a heat sensitive factor. Neurons R3-R14. A cluster of 12 giant neurons located on the right side of the abdominal ganglion.

It is found in the secreted. Its function is as follows. HRBP is a myoactive peptide that excites Aplysia heart and enhances gut motility in vitro. In Aplysia californica (California sea hare), this protein is Abdominal ganglion neuropeptide R3-14.